We begin with the raw amino-acid sequence, 380 residues long: Cytochrome b (380 aa).

Helical transmembrane passes span 34 to 54 (FGSLLAVCLMTQILTGLLLAM), 78 to 99 (WLIRNLHANGASFFFICIFLHI), 114 to 134 (WNTGVILLLTLMATAFVGYVL), and 179 to 199 (FFALHFLLPFAIAGITIIHLT). Residues His-84 and His-98 each contribute to the heme b site. Positions 183 and 197 each coordinate heme b. His-202 is a binding site for a ubiquinone. 4 consecutive transmembrane segments (helical) span residues 227–247 (FKDILGLTLMLTPFLTLALFS), 289–309 (LGGVLALAASVLILFLIPFLH), 321–341 (LSQTLFWLLVANLLILTWIGS), and 348–368 (FIIIGQMASLSYFTILLILFP).

The protein belongs to the cytochrome b family. As to quaternary structure, the cytochrome bc1 complex contains 11 subunits: 3 respiratory subunits (MT-CYB, CYC1 and UQCRFS1), 2 core proteins (UQCRC1 and UQCRC2) and 6 low-molecular weight proteins (UQCRH/QCR6, UQCRB/QCR7, UQCRQ/QCR8, UQCR10/QCR9, UQCR11/QCR10 and a cleavage product of UQCRFS1). This cytochrome bc1 complex then forms a dimer. Heme b is required as a cofactor.

The protein localises to the mitochondrion inner membrane. In terms of biological role, component of the ubiquinol-cytochrome c reductase complex (complex III or cytochrome b-c1 complex) that is part of the mitochondrial respiratory chain. The b-c1 complex mediates electron transfer from ubiquinol to cytochrome c. Contributes to the generation of a proton gradient across the mitochondrial membrane that is then used for ATP synthesis. The protein is Cytochrome b (MT-CYB) of Gallus gallus (Chicken).